Reading from the N-terminus, the 344-residue chain is AA9 family lytic polysaccharide monooxygenase cel61A (344 aa).

The signal sequence occupies residues 1–21 (MIQKLSNLLVTALAVATGVVG). A Cu(2+)-binding site is contributed by histidine 22. 2 disulfides stabilise this stretch: cysteine 77/cysteine 198 and cysteine 118/cysteine 122. An N-linked (GlcNAc...) asparagine glycan is attached at asparagine 80. Histidine 107 serves as a coordination point for Cu(2+). A glycan (N-linked (GlcNAc...) asparagine) is linked at asparagine 158. Positions 184 and 193 each coordinate O2. Tyrosine 195 contributes to the Cu(2+) binding site. A disordered region spans residues 262 to 310 (ATASATVPGGGSGPTSRTTTTARTTQASSRPSSTPPATTSAPAGGPTQT). Residues 275 to 310 (PTSRTTTTARTTQASSRPSSTPPATTSAPAGGPTQT) are compositionally biased toward low complexity. The CBM1 domain maps to 307–343 (PTQTLYGQCGGSGYSGPTRCAPPATCSTLNPYYAQCL).

It belongs to the polysaccharide monooxygenase AA9 family. Requires Cu(2+) as cofactor.

Its subcellular location is the secreted. The catalysed reaction is [(1-&gt;4)-beta-D-glucosyl]n+m + reduced acceptor + O2 = 4-dehydro-beta-D-glucosyl-[(1-&gt;4)-beta-D-glucosyl]n-1 + [(1-&gt;4)-beta-D-glucosyl]m + acceptor + H2O.. Lytic polysaccharide monooxygenase (LPMO) that depolymerizes crystalline and amorphous polysaccharides via the oxidation of scissile alpha- or beta-(1-4)-glycosidic bonds, yielding C1 or C4 oxidation products. Catalysis by LPMOs requires the reduction of the active-site copper from Cu(II) to Cu(I) by a reducing agent and H(2)O(2) or O(2) as a cosubstrate. Shows activity on beta-glucan and amorphous cellulose. Does not show beta-1-3-glucanase, beta-1,6-glucanase, mannanase, xylanase, beta-1,3-galactosidase, amylase, pectinase, nor chitinase activities. The sequence is that of AA9 family lytic polysaccharide monooxygenase cel61A from Hypocrea jecorina (Trichoderma reesei).